The chain runs to 352 residues: tRNA-specific 2-thiouridylase MnmA (352 aa).

Residues Ala-6–Ser-13 and Leu-32 contribute to the ATP site. Cys-101 (nucleophile) is an active-site residue. Cys-101 and Cys-194 are disulfide-bonded. Gly-125 is an ATP binding site. Residues Lys-144–Gln-146 are interaction with tRNA. Cys-194 serves as the catalytic Cysteine persulfide intermediate.

The protein belongs to the MnmA/TRMU family.

It is found in the cytoplasm. It catalyses the reaction S-sulfanyl-L-cysteinyl-[protein] + uridine(34) in tRNA + AH2 + ATP = 2-thiouridine(34) in tRNA + L-cysteinyl-[protein] + A + AMP + diphosphate + H(+). Catalyzes the 2-thiolation of uridine at the wobble position (U34) of tRNA, leading to the formation of s(2)U34. This Frankia alni (strain DSM 45986 / CECT 9034 / ACN14a) protein is tRNA-specific 2-thiouridylase MnmA.